We begin with the raw amino-acid sequence, 235 residues long: Hydroxyacylglutathione hydrolase (235 aa).

Residues histidine 53, histidine 55, aspartate 57, histidine 58, histidine 109, aspartate 127, and histidine 165 each coordinate Zn(2+).

It belongs to the metallo-beta-lactamase superfamily. Glyoxalase II family. In terms of assembly, monomer. Zn(2+) serves as cofactor.

It catalyses the reaction an S-(2-hydroxyacyl)glutathione + H2O = a 2-hydroxy carboxylate + glutathione + H(+). The protein operates within secondary metabolite metabolism; methylglyoxal degradation; (R)-lactate from methylglyoxal: step 2/2. Thiolesterase that catalyzes the hydrolysis of S-D-lactoyl-glutathione to form glutathione and D-lactic acid. The protein is Hydroxyacylglutathione hydrolase of Glaesserella parasuis serovar 5 (strain SH0165) (Haemophilus parasuis).